Here is a 156-residue protein sequence, read N- to C-terminus: Arginine repressor (156 aa).

It belongs to the ArgR family.

The protein resides in the cytoplasm. Its pathway is amino-acid biosynthesis; L-arginine biosynthesis [regulation]. In terms of biological role, regulates arginine biosynthesis genes. The chain is Arginine repressor from Aliivibrio fischeri (strain ATCC 700601 / ES114) (Vibrio fischeri).